The chain runs to 241 residues: MNVSRPSGRQADALRPVRIERAFTCHAEGSVLVSFGNTLVVCTASVEAKVPVFLRNKGEGWITAEYGMLPRSTHTRSEREAARGKQAGRTLEIQRLIGRALRTCVDRTALGERTITLDCDVLQADGGTRTAAITGAYVALVDAVRCLEQRGQLKKSPLIGAVAAVSVGIYRGMPVLDLDYPEDSDCDTDMNVVMNDEGGFIELQGTAEQQAFRRGELDMLLALAERGTAMLFDIQREALAR.

Residues Arg89 and Gly127–Arg129 contribute to the phosphate site.

This sequence belongs to the RNase PH family. As to quaternary structure, homohexameric ring arranged as a trimer of dimers.

It catalyses the reaction tRNA(n+1) + phosphate = tRNA(n) + a ribonucleoside 5'-diphosphate. In terms of biological role, phosphorolytic 3'-5' exoribonuclease that plays an important role in tRNA 3'-end maturation. Removes nucleotide residues following the 3'-CCA terminus of tRNAs; can also add nucleotides to the ends of RNA molecules by using nucleoside diphosphates as substrates, but this may not be physiologically important. Probably plays a role in initiation of 16S rRNA degradation (leading to ribosome degradation) during starvation. This Xylella fastidiosa (strain M23) protein is Ribonuclease PH.